A 385-amino-acid polypeptide reads, in one-letter code: 4-hydroxy-3-methylbut-2-en-1-yl diphosphate synthase (flavodoxin) 2 (385 aa).

Positions 281, 284, 316, and 323 each coordinate [4Fe-4S] cluster.

Belongs to the IspG family. [4Fe-4S] cluster serves as cofactor.

It catalyses the reaction (2E)-4-hydroxy-3-methylbut-2-enyl diphosphate + oxidized [flavodoxin] + H2O + 2 H(+) = 2-C-methyl-D-erythritol 2,4-cyclic diphosphate + reduced [flavodoxin]. The protein operates within isoprenoid biosynthesis; isopentenyl diphosphate biosynthesis via DXP pathway; isopentenyl diphosphate from 1-deoxy-D-xylulose 5-phosphate: step 5/6. Its function is as follows. Converts 2C-methyl-D-erythritol 2,4-cyclodiphosphate (ME-2,4cPP) into 1-hydroxy-2-methyl-2-(E)-butenyl 4-diphosphate. This Streptomyces avermitilis (strain ATCC 31267 / DSM 46492 / JCM 5070 / NBRC 14893 / NCIMB 12804 / NRRL 8165 / MA-4680) protein is 4-hydroxy-3-methylbut-2-en-1-yl diphosphate synthase (flavodoxin) 2.